We begin with the raw amino-acid sequence, 323 residues long: Breast cancer metastasis-suppressor 1-like protein (323 aa).

Basic and acidic residues predominate over residues 1-17 (MPVHSRGDKKETNHHDE). Residues 1–56 (MPVHSRGDKKETNHHDEMEVDYAENEGSSSEDEDTESSSVSEDGDSSEMDDEDCER) form a disordered region. The span at 18-53 (MEVDYAENEGSSSEDEDTESSSVSEDGDSSEMDDED) shows a compositional bias: acidic residues. Coiled coils occupy residues 52 to 84 (EDCERRRMECLDEMSNLEKQFTDLKDQLYKERL) and 149 to 180 (EKLLLYDTVQSELEEKIRRLEEDRHSIDITSE). S197 bears the Phosphoserine mark. Residues K240 and K246 each participate in a glycyl lysine isopeptide (Lys-Gly) (interchain with G-Cter in SUMO2) cross-link.

Belongs to the BRMS1 family. In terms of assembly, component of the Sin3/HDAC1 corepressor complex at least composed of BRMS1, BRMS1L and ING2/ING1L. Interacts with HDAC and SIN3A.

Its subcellular location is the nucleus. Its function is as follows. Involved in the histone deacetylase (HDAC1)-dependent transcriptional repression activity. When overexpressed in lung cancer cell line that lacks p53/TP53 expression, inhibits cell growth. In Bos taurus (Bovine), this protein is Breast cancer metastasis-suppressor 1-like protein (BRMS1L).